A 44-amino-acid polypeptide reads, in one-letter code: Omega-plectoxin-Pt1a (44 aa).

5 disulfides stabilise this stretch: Cys-3-Cys-17, Cys-10-Cys-23, Cys-16-Cys-35, Cys-20-Cys-42, and Cys-25-Cys-33. Thr-44 is subject to Threonine amide. Thr-44 is lipidated: O-palmitoyl threonine.

It belongs to the neurotoxin 02 (plectoxin) family. 02 (plectoxin) subfamily. Post-translationally, contains 5 disulfide bonds. In terms of processing, acylation by palmitate is required for biological activity. In terms of tissue distribution, expressed by the venom gland.

The protein localises to the secreted. Toxin that inhibits presynaptic voltage-gated calcium channel (Cav) in Drosophila nerve terminals, most likely through specific block of the Cav2 channel (known as Dmca1A). This chain is Omega-plectoxin-Pt1a, found in Plectreurys tristis (Spider).